Reading from the N-terminus, the 336-residue chain is Octanoyltransferase (336 aa).

The segment covering 1–16 (MPKSALMSSSFQTSVS) has biased composition (polar residues). 2 disordered regions span residues 1 to 22 (MPKSALMSSSFQTSVSPRPLPV) and 48 to 88 (QGKG…GGGR). The segment at 1–92 (MPKSALMSSS…AAGGGRTIRD (92 aa)) is unknown. Residues 93–336 (VKEAAFDVLD…GQEALSVASP (244 aa)) form a lipB domain region. The BPL/LPL catalytic domain occupies 124 to 318 (VGGRPTLLLV…AFALTFADYD (195 aa)). Residues 170–177 (RGGDVTYH), 244–246 (SIG), and 257–259 (GIG) each bind substrate. Residue Cys-275 is the Acyl-thioester intermediate of the active site.

This sequence in the C-terminal section; belongs to the LipB family.

Its subcellular location is the cytoplasm. It catalyses the reaction octanoyl-[ACP] + L-lysyl-[protein] = N(6)-octanoyl-L-lysyl-[protein] + holo-[ACP] + H(+). It participates in protein modification; protein lipoylation via endogenous pathway; protein N(6)-(lipoyl)lysine from octanoyl-[acyl-carrier-protein]: step 1/2. Catalyzes the transfer of endogenously produced octanoic acid from octanoyl-acyl-carrier-protein onto the lipoyl domains of lipoate-dependent enzymes. Lipoyl-ACP can also act as a substrate although octanoyl-ACP is likely to be the physiological substrate. This is Octanoyltransferase from Deinococcus radiodurans (strain ATCC 13939 / DSM 20539 / JCM 16871 / CCUG 27074 / LMG 4051 / NBRC 15346 / NCIMB 9279 / VKM B-1422 / R1).